Reading from the N-terminus, the 182-residue chain is NADH-quinone oxidoreductase subunit C 2 (182 aa).

Residues 153–182 are disordered; that stretch reads YKDKLNPFGAEGPPPTQPDLATNDIPQGGR.

It belongs to the complex I 30 kDa subunit family. In terms of assembly, NDH-1 is composed of 14 different subunits. Subunits NuoB, C, D, E, F, and G constitute the peripheral sector of the complex.

The protein localises to the cell inner membrane. It catalyses the reaction a quinone + NADH + 5 H(+)(in) = a quinol + NAD(+) + 4 H(+)(out). In terms of biological role, NDH-1 shuttles electrons from NADH, via FMN and iron-sulfur (Fe-S) centers, to quinones in the respiratory chain. The immediate electron acceptor for the enzyme in this species is believed to be ubiquinone. Couples the redox reaction to proton translocation (for every two electrons transferred, four hydrogen ions are translocated across the cytoplasmic membrane), and thus conserves the redox energy in a proton gradient. The sequence is that of NADH-quinone oxidoreductase subunit C 2 from Rhizobium meliloti (strain 1021) (Ensifer meliloti).